Consider the following 147-residue polypeptide: Large ribosomal subunit protein uL16 (147 aa).

It belongs to the universal ribosomal protein uL16 family. In terms of assembly, part of the 50S ribosomal subunit.

Functionally, binds 23S rRNA and is also seen to make contacts with the A and possibly P site tRNAs. The chain is Large ribosomal subunit protein uL16 from Caldicellulosiruptor saccharolyticus (strain ATCC 43494 / DSM 8903 / Tp8T 6331).